A 255-amino-acid polypeptide reads, in one-letter code: MKTIAVNSFKGGTAKTSTTLHLGAALAQYHQARVLLIDFDAQANLTSGLGLDPDCYDSLAVVLQGEKEIQEVIRPIQDTQLDLIPADTWLERIEVSGNLAADRYSHERLKYVLGSVQDKYDYVIIDTPPSLCWLTESALIAADYALICATPEFYSVKGLERLAGFIQGISARHPLTILGVALSFWNCRGKNNSAFAELIHKTFPGKLLNTKIRRDITVSEAAIHGKPVFATSPSARASEDYFNLTKELLILLRDI.

It belongs to the ParA family.

This chain is ParA family protein CPn_0805/CP_1066/CPj0805/CpB0834, found in Chlamydia pneumoniae (Chlamydophila pneumoniae).